The sequence spans 160 residues: Urease accessory protein UreE (160 aa).

This sequence belongs to the UreE family.

The protein localises to the cytoplasm. Involved in urease metallocenter assembly. Binds nickel. Probably functions as a nickel donor during metallocenter assembly. In Acinetobacter baumannii (strain ACICU), this protein is Urease accessory protein UreE.